We begin with the raw amino-acid sequence, 87 residues long: uncharacterized protein (87 aa).

Residues 29–49 form a helical membrane-spanning segment; the sequence is ILWMIIFVVIIAVIIYILISP.

The protein resides in the membrane. This is an uncharacterized protein from Methanocaldococcus jannaschii (strain ATCC 43067 / DSM 2661 / JAL-1 / JCM 10045 / NBRC 100440) (Methanococcus jannaschii).